The chain runs to 440 residues: 23S rRNA (uracil(1939)-C(5))-methyltransferase RlmD (440 aa).

The TRAM domain occupies 8-69 (PQKINKLQRE…RQFGLATTKK (62 aa)). 4 residues coordinate [4Fe-4S] cluster: Cys82, Cys88, Cys91, and Cys169. Residues Gln272, Phe301, Asn306, Glu322, Asp349, and Asp370 each coordinate S-adenosyl-L-methionine. Catalysis depends on Cys396, which acts as the Nucleophile.

It belongs to the class I-like SAM-binding methyltransferase superfamily. RNA M5U methyltransferase family. RlmD subfamily.

The catalysed reaction is uridine(1939) in 23S rRNA + S-adenosyl-L-methionine = 5-methyluridine(1939) in 23S rRNA + S-adenosyl-L-homocysteine + H(+). Functionally, catalyzes the formation of 5-methyl-uridine at position 1939 (m5U1939) in 23S rRNA. The chain is 23S rRNA (uracil(1939)-C(5))-methyltransferase RlmD from Mannheimia succiniciproducens (strain KCTC 0769BP / MBEL55E).